A 214-amino-acid polypeptide reads, in one-letter code: Non-structural protein NP-1 (214 aa).

Disordered regions lie at residues 1-87 (MSSE…TNPY) and 192-214 (ESEEVTDEEMLSAVESMDTNASN). A compositionally biased stretch (basic residues) spans 33-43 (SRSRSPIRRHG). Basic and acidic residues predominate over residues 44–55 (EKNLEYAHHSNQ). Positions 56 to 71 (ENRQSSYTALKTSDQA) are enriched in polar residues. Positions 192–201 (ESEEVTDEEM) are enriched in acidic residues.

The protein belongs to the Bocaparvovirus Non-structural protein NP-1 family.

It localises to the host nucleus. In terms of biological role, required for the expression of the capsid proteins. Performs the splicing and internal polyadenylation of the viral capsid-encoding mRNA precursor, which allows its maturation and expression. Transactivates the viral promoter. This chain is Non-structural protein NP-1 (NP1), found in Human bocavirus 2 (HBoV2).